The following is a 346-amino-acid chain: uncharacterized protein (346 aa).

An N-terminal signal peptide occupies residues 1 to 28; the sequence is MFEWMKNKKAISPILALLIVLGVTIVVG.

This is an uncharacterized protein from Methanocaldococcus jannaschii (strain ATCC 43067 / DSM 2661 / JAL-1 / JCM 10045 / NBRC 100440) (Methanococcus jannaschii).